A 444-amino-acid chain; its full sequence is NADH-quinone oxidoreductase subunit F (444 aa).

61–70 (GRGGAGFSTG) is a binding site for NAD(+). Residue 176–223 (GAGRYICGEETALINSLEGRRANPRSKPPFPAVFGLWGKPTCVNNVET) coordinates FMN. [4Fe-4S] cluster-binding residues include C353, C356, C359, and C400.

It belongs to the complex I 51 kDa subunit family. Composed of 13 different subunits. Subunits NuoCD, E, F, and G constitute the peripheral sector of the complex. Requires FMN as cofactor. The cofactor is [4Fe-4S] cluster.

The catalysed reaction is a quinone + NADH + 5 H(+)(in) = a quinol + NAD(+) + 4 H(+)(out). Its function is as follows. NDH-1 shuttles electrons from NADH, via FMN and iron-sulfur (Fe-S) centers, to quinones in the respiratory chain. Couples the redox reaction to proton translocation (for every two electrons transferred, four hydrogen ions are translocated across the cytoplasmic membrane), and thus conserves the redox energy in a proton gradient. This chain is NADH-quinone oxidoreductase subunit F (nuoF), found in Buchnera aphidicola subsp. Acyrthosiphon pisum (strain APS) (Acyrthosiphon pisum symbiotic bacterium).